Here is a 485-residue protein sequence, read N- to C-terminus: Aspartyl/glutamyl-tRNA(Asn/Gln) amidotransferase subunit B (485 aa).

This sequence belongs to the GatB/GatE family. GatB subfamily. Heterotrimer of A, B and C subunits.

It catalyses the reaction L-glutamyl-tRNA(Gln) + L-glutamine + ATP + H2O = L-glutaminyl-tRNA(Gln) + L-glutamate + ADP + phosphate + H(+). The enzyme catalyses L-aspartyl-tRNA(Asn) + L-glutamine + ATP + H2O = L-asparaginyl-tRNA(Asn) + L-glutamate + ADP + phosphate + 2 H(+). Functionally, allows the formation of correctly charged Asn-tRNA(Asn) or Gln-tRNA(Gln) through the transamidation of misacylated Asp-tRNA(Asn) or Glu-tRNA(Gln) in organisms which lack either or both of asparaginyl-tRNA or glutaminyl-tRNA synthetases. The reaction takes place in the presence of glutamine and ATP through an activated phospho-Asp-tRNA(Asn) or phospho-Glu-tRNA(Gln). In Borrelia turicatae (strain 91E135), this protein is Aspartyl/glutamyl-tRNA(Asn/Gln) amidotransferase subunit B.